We begin with the raw amino-acid sequence, 272 residues long: NADH-dependent L-xylulose reductase (272 aa).

2 residues coordinate NADP(+): Leu24 and Asp78. The active-site Proton donor is the Ser160. NADP(+) is bound by residues Tyr175, Lys179, and Ile208. Tyr175 acts as the Proton acceptor in catalysis. The Lowers pKa of active site Tyr role is filled by Lys179.

It belongs to the short-chain dehydrogenases/reductases (SDR) family.

The catalysed reaction is xylitol + NAD(+) = L-xylulose + NADH + H(+). It catalyses the reaction D-arabinitol + NAD(+) = D-ribulose + NADH + H(+). NADH-dependent L-xylulose reductase; part of the yeast pathway for L-arabinose catabolism. Reversibly converts L-xylulose to xylitol and D-ribulose to D-arabinitol. It has a much lower activity with D-xylulose. Sugar alcohols can serve as a substrate when the hydroxyl group of C-2 is in the L- and the hydroxyl group of the C-3 is in the D-configuration. Also seems to be specific for sugar alcohols that have not more than 5 carbons since no activity is observed with dulcitol (galactitol), which has the hydroxyl group of C-2 in L- and of C-3 in D-configuration, but is a six-carbon sugar alcohol. The chain is NADH-dependent L-xylulose reductase from Ambrosiozyma monospora (Yeast).